The primary structure comprises 583 residues: Pescadillo (583 aa).

Residues 275 to 329 (EKLSALSASLARMVASVEEEEAELDHFPTEGEDQEKMEVREKMEQQQSKQKKLFE) are a coiled coil. The region spanning 323-416 (KQKKLFEGLK…IQLPVEEYFL (94 aa)) is the BRCT domain. Disordered regions lie at residues 448 to 526 (RGEK…EEKA) and 558 to 583 (ANKLAAKRKAHDDASKADKKKKKKKC). Acidic residues predominate over residues 455 to 489 (EEDEEEEGEEEEDDEEDEEDDEQSEDEEEAEEEAN). Residues 512–526 (AKAENRARAAEEEKA) are compositionally biased toward basic and acidic residues.

Belongs to the pescadillo family. In terms of assembly, component of the PeBoW complex, composed of bop1, pes1 and wdr12. The complex is held together by bop1, which interacts with pes1 via its N-terminal domain and with wdr12 via a high-affinity interaction between the seven-bladed beta-propeller domains of the 2 proteins. The PeBoW complex associates with the 66S pre-ribosome.

The protein localises to the nucleus. Its subcellular location is the nucleolus. It is found in the nucleoplasm. Component of the PeBoW complex, which is required for maturation of 28S and 5.8S ribosomal RNAs and formation of the 60S ribosome. This chain is Pescadillo (pes), found in Danio rerio (Zebrafish).